The primary structure comprises 192 residues: Leucine-rich repeat-containing protein 51 (192 aa).

LRR repeat units lie at residues 49–71, 80–101, and 103–124; these read SLTQ…NQVA, NLAW…LTTF, and NLSV…NKLA. In terms of domain architecture, LRRCT spans 137–175; that stretch reads NPMEEEKGYRQYVLCTLSRITTFDFSGVTKADRTTAEVW.

The protein resides in the cytoplasm. This is Leucine-rich repeat-containing protein 51 from Homo sapiens (Human).